A 120-amino-acid polypeptide reads, in one-letter code: MIAFRAVWSALLASLLLLLLAPSASPVDAFSPPEASLTGGQSLSKRSLFDPSCTGVFDRQLLRRLGRVCDDCFNVFREPNVATECRSNCYNNPVFRQCMAYVVPAHLHNEHREAVQMVGK.

The signal sequence occupies residues M1 to A24. 3 disulfides stabilise this stretch: C53–C89, C69–C85, and C72–C98. A Valine amide modification is found at V118.

The protein belongs to the arthropod CHH/MIH/GIH/VIH hormone family. Produced by the medulla terminalis X-organ in the eyestalks and transported to the sinus gland where they are stored and released.

It is found in the secreted. Its function is as follows. Hormone found in the sinus gland of isopods and decapods which controls the blood sugar level. Has a secretagogue action over the amylase released from the midgut gland. May act as a stress hormone and may be involved in the control of molting and reproduction. This chain is Crustacean hyperglycemic hormones 1, found in Penaeus japonicus (Kuruma prawn).